The chain runs to 469 residues: Trigger factor (469 aa).

The region spanning 165–250 is the PPIase FKBP-type domain; sequence GDCVTIDYLG…VKAISKPDEL (86 aa). Residues 439–460 are compositionally biased toward basic and acidic residues; that stretch reads EYDESDLTEKKPEKKKGVEKTP. The tract at residues 439–469 is disordered; sequence EYDESDLTEKKPEKKKGVEKTPIRKKAPKKG.

It belongs to the FKBP-type PPIase family. Tig subfamily.

It is found in the cytoplasm. It catalyses the reaction [protein]-peptidylproline (omega=180) = [protein]-peptidylproline (omega=0). Functionally, involved in protein export. Acts as a chaperone by maintaining the newly synthesized protein in an open conformation. Functions as a peptidyl-prolyl cis-trans isomerase. This Bartonella quintana (strain Toulouse) (Rochalimaea quintana) protein is Trigger factor.